A 410-amino-acid polypeptide reads, in one-letter code: Multifunctional CCA protein (410 aa).

The ATP site is built by Gly-8 and Arg-11. 2 residues coordinate CTP: Gly-8 and Arg-11. Positions 21 and 23 each coordinate Mg(2+). ATP-binding residues include Arg-91, Arg-137, and Arg-140. Arg-91, Arg-137, and Arg-140 together coordinate CTP. The HD domain occupies 228 to 329 (TGVHVLSVLR…LELLQRFDVF (102 aa)).

It belongs to the tRNA nucleotidyltransferase/poly(A) polymerase family. Bacterial CCA-adding enzyme type 1 subfamily. In terms of assembly, monomer. Can also form homodimers and oligomers. Mg(2+) serves as cofactor. The cofactor is Ni(2+).

The catalysed reaction is a tRNA precursor + 2 CTP + ATP = a tRNA with a 3' CCA end + 3 diphosphate. It carries out the reaction a tRNA with a 3' CCA end + 2 CTP + ATP = a tRNA with a 3' CCACCA end + 3 diphosphate. Its function is as follows. Catalyzes the addition and repair of the essential 3'-terminal CCA sequence in tRNAs without using a nucleic acid template. Adds these three nucleotides in the order of C, C, and A to the tRNA nucleotide-73, using CTP and ATP as substrates and producing inorganic pyrophosphate. tRNA 3'-terminal CCA addition is required both for tRNA processing and repair. Also involved in tRNA surveillance by mediating tandem CCA addition to generate a CCACCA at the 3' terminus of unstable tRNAs. While stable tRNAs receive only 3'-terminal CCA, unstable tRNAs are marked with CCACCA and rapidly degraded. This chain is Multifunctional CCA protein, found in Ectopseudomonas mendocina (strain ymp) (Pseudomonas mendocina).